The chain runs to 123 residues: uncharacterized protein (123 aa).

This is an uncharacterized protein from Pasteurella multocida (strain Pm70).